A 393-amino-acid polypeptide reads, in one-letter code: Putative competence-damage inducible protein (393 aa).

The protein belongs to the CinA family.

The polypeptide is Putative competence-damage inducible protein (Streptococcus suis (strain 05ZYH33)).